Reading from the N-terminus, the 570-residue chain is Proline--tRNA ligase (570 aa).

This sequence belongs to the class-II aminoacyl-tRNA synthetase family. ProS type 1 subfamily. Homodimer.

The protein localises to the cytoplasm. The enzyme catalyses tRNA(Pro) + L-proline + ATP = L-prolyl-tRNA(Pro) + AMP + diphosphate. Catalyzes the attachment of proline to tRNA(Pro) in a two-step reaction: proline is first activated by ATP to form Pro-AMP and then transferred to the acceptor end of tRNA(Pro). As ProRS can inadvertently accommodate and process non-cognate amino acids such as alanine and cysteine, to avoid such errors it has two additional distinct editing activities against alanine. One activity is designated as 'pretransfer' editing and involves the tRNA(Pro)-independent hydrolysis of activated Ala-AMP. The other activity is designated 'posttransfer' editing and involves deacylation of mischarged Ala-tRNA(Pro). The misacylated Cys-tRNA(Pro) is not edited by ProRS. The chain is Proline--tRNA ligase from Neisseria meningitidis serogroup C / serotype 2a (strain ATCC 700532 / DSM 15464 / FAM18).